Here is a 224-residue protein sequence, read N- to C-terminus: Small ribosomal subunit protein uS3 (224 aa).

The KH type-2 domain occupies 39–107 (IREFLKKKPS…DVWVEIAEVK (69 aa)).

This sequence belongs to the universal ribosomal protein uS3 family. As to quaternary structure, part of the 30S ribosomal subunit. Forms a tight complex with proteins S10 and S14.

In terms of biological role, binds the lower part of the 30S subunit head. Binds mRNA in the 70S ribosome, positioning it for translation. The sequence is that of Small ribosomal subunit protein uS3 from Chlamydia trachomatis serovar D (strain ATCC VR-885 / DSM 19411 / UW-3/Cx).